We begin with the raw amino-acid sequence, 75 residues long: Putative membrane protein insertion efficiency factor (75 aa).

It belongs to the UPF0161 family.

Its subcellular location is the cell membrane. Could be involved in insertion of integral membrane proteins into the membrane. This chain is Putative membrane protein insertion efficiency factor, found in Bacillus velezensis (strain DSM 23117 / BGSC 10A6 / LMG 26770 / FZB42) (Bacillus amyloliquefaciens subsp. plantarum).